The following is a 177-amino-acid chain: NADH-quinone oxidoreductase subunit B (177 aa).

Residues Cys-56, Cys-57, Cys-121, and Cys-151 each coordinate [4Fe-4S] cluster.

This sequence belongs to the complex I 20 kDa subunit family. In terms of assembly, NDH-1 is composed of 14 different subunits. Subunits NuoB, C, D, E, F, and G constitute the peripheral sector of the complex. It depends on [4Fe-4S] cluster as a cofactor.

It localises to the cell inner membrane. The enzyme catalyses a quinone + NADH + 5 H(+)(in) = a quinol + NAD(+) + 4 H(+)(out). Its function is as follows. NDH-1 shuttles electrons from NADH, via FMN and iron-sulfur (Fe-S) centers, to quinones in the respiratory chain. The immediate electron acceptor for the enzyme in this species is believed to be ubiquinone. Couples the redox reaction to proton translocation (for every two electrons transferred, four hydrogen ions are translocated across the cytoplasmic membrane), and thus conserves the redox energy in a proton gradient. This Rhodobacter capsulatus (Rhodopseudomonas capsulata) protein is NADH-quinone oxidoreductase subunit B.